Here is a 968-residue protein sequence, read N- to C-terminus: MGVPALFRWLSRKYPKIISPVVEEEDHEIGGAKYENPNPNGEIDNLYLDMNGIVHPCSHPEHKKPPETEDEMFLDIFKYTDRVLMMARPRKVLMIAVDGVAPRAKMNQQRARRFRAAKDAELKAKQLEIEVQERELRGEIINDAIKGKKQWDSNAITPGTPFMDRLAEALRYWVAYKLSSDPGWANLQVIISDATVPGEGEHKLMSFIRSQRSDPQYDPNTKHCIYGLDADLIFLGLATHEPHFRVLREDVFASQDKKFTIKDQIADANSNGDTVAKEDKKPFLWLHVNVLREYLQVELFTPRMSFPFELERAIDDWVFLCFFAGNDFLPHLPSLDVRDNGIDTLVQCWKRSLPILKDYVTCDGKLNLKSVEVLMSNLAYKESEIFKNKHAAEQRREENNKRRKLAQEQERALKRVYSSQVSKGKDKAPLTADVNMPLMDTSGQNVEGYANLTNSDIVQNRAILTKANLANSDAAAELKKLIDSKKTQVTVVQDQIATDSSANSETTTSESELEEIQSDNSLKRKLEPEEDKQTQSDDIKLWEPGYNKRYYEAKFHCQSDEEIEQTKRDVVRHYVEGIAWVALYYYQGCPSWNWYFPYHYAPFAADFTNLEELFPEGVKFKLGEPFRPFEQLMSVLPAASGHTLPQVFRDLMSNPDSEIIDFYPEEFEIDMNGKKMSWQGIPLLPFIDEKRLLDAVQKKYELLTPDEKSRNTNKEAELFISPANKNFSKFSEKLYKENENEVTFKYAKSGLSGKIFKLGTFNPEGVFNFPLNEGYMPNVNNSDYFQAIYHFPKTKTGKSMILNGHIAPLPALTTADKNDLLYQLDKFNNRRNGGRFNSTLDNSDYINKGPAGKELYKTYSMRRGGYRSYLQYLTNGHHPDHQSQNSQYLSYGQQKPYGGQGSYNQQGYYNQQGRYNQQGNNYNQQGRYSQQSQYNQYRSNTQRFNNNQNYNQSSNNSRSGYLPPRPQR.

Coiled-coil stretches lie at residues 113 to 140 (RFRAAKDAELKAKQLEIEVQERELRGEI) and 387 to 416 (KNKHAAEQRREENNKRRKLAQEQERALKRV). Residues 498-510 (TDSSANSETTTSE) are compositionally biased toward low complexity. Disordered stretches follow at residues 498–538 (TDSS…QSDD) and 873–968 (LTNG…RPQR). Residues 521–538 (SLKRKLEPEEDKQTQSDD) are compositionally biased toward basic and acidic residues. Residues 882–893 (QSQNSQYLSYGQ) are compositionally biased toward polar residues. Over residues 902–959 (SYNQQGYYNQQGRYNQQGNNYNQQGRYSQQSQYNQYRSNTQRFNNNQNYNQSSNNSRS) the composition is skewed to low complexity.

Belongs to the 5'-3' exonuclease family. XRN2/RAT1 subfamily. In terms of assembly, interacts with RAI1; the interaction is direct, stabilizes RAT1 protein structure and may stimulate its exoribonuclease activity. The interaction also stimulates RAI1 pyrophosphohydrolase activity, probably by recruiting it to mRNA substrates.

It localises to the nucleus. Functionally, possesses 5'-&gt;3' exoribonuclease activity. Required for the processing of nuclear mRNA and rRNA precursors. May promote the termination of transcription by RNA polymerase II. Essential for vegetative cell growth and chromosome segregation. This chain is 5'-3' exoribonuclease 2 (RAT1), found in Candida albicans (strain SC5314 / ATCC MYA-2876) (Yeast).